The chain runs to 256 residues: Probable galactose dehydrogenase GalD (256 aa).

NAD(+) contacts are provided by residues 20–23, 71–72, and asparagine 98; these read GGGS and DL. Serine 150 contacts substrate. Tyrosine 163 serves as the catalytic Proton acceptor. Residues 163-167 and isoleucine 196 contribute to the NAD(+) site; that span reads YSTAK.

It belongs to the short-chain dehydrogenases/reductases (SDR) family.

Involved in the degradation of galactose via the DeLey-Doudoroff pathway. Catalyzes the oxidation of galactose in the presence of NAD(+). Uses NAD(+) as a hydrogen acceptor more efficiently than NADP(+). The sequence is that of Probable galactose dehydrogenase GalD (galD) from Rhizobium meliloti (strain 1021) (Ensifer meliloti).